The following is a 1967-amino-acid chain: RQC trigger complex helicase SLH1 (1967 aa).

Residues 297-485 enclose the Helicase ATP-binding 1 domain; sequence PVAYKTNENM…FLGVNRQIGM (189 aa). An ATP-binding site is contributed by 310–317; the sequence is APTGAGKT. Positions 427 to 430 match the DEVH box motif; it reads DEVH. A Helicase C-terminal 1 domain is found at 516-735; it reads NIDKVAYDKL…NVDEAIEWLG (220 aa). In terms of domain architecture, SEC63 1 spans 795 to 1100; the sequence is AKDLGRVSSD…GCESTHAISF (306 aa). Residues 1149-1324 form the Helicase ATP-binding 2 domain; it reads YTLYNTNENA…WLGVKDHGLY (176 aa). Position 1162 to 1169 (1162 to 1169) interacts with ATP; sequence SPTGSGKT. A DEAH box motif is present at residues 1266 to 1269; the sequence is DEIH. The region spanning 1355-1550 is the Helicase C-terminal 2 domain; that stretch reads MNKPVFMAIK…SLHKVLDDHL (196 aa). The SEC63 2 domain maps to 1626-1776; the sequence is ATPFLSISSY…MMQCIKQGYW (151 aa).

It belongs to the helicase family. SKI2 subfamily. Component of the RQT (ribosome quality control trigger) complex, composed of SLH1, CUE3, and RQT4. Interacts with CUE3. Interacts with RQT4. Interacts with HEL2. Associates with translating ribosomes.

The protein resides in the cytoplasm. Its subcellular location is the cytosol. It carries out the reaction ATP + H2O = ADP + phosphate + H(+). In terms of biological role, involved in activation of the ribosome quality control (RQC) pathway, a pathway that degrades nascent peptide chains during problematic translation. Drives the splitting of stalled ribosomes that are polyubiquitinated in a HEL2-dependent manner, as part of the ribosome quality control trigger (RQT) complex. Also represses the translation of non-poly(A) mRNAs together with SKI2. May block translation by inhibiting translation initiation factor 5B (FUN12) action on mRNAs lacking a 3' poly(A) structure. Involved in antiviral defense, preventing L-A dsRNA virus propagation by specifically blocking translation of viral mRNAs. The chain is RQC trigger complex helicase SLH1 from Saccharomyces cerevisiae (strain ATCC 204508 / S288c) (Baker's yeast).